Consider the following 340-residue polypeptide: GTP 3',8-cyclase (340 aa).

The region spanning 8–227 (KLGRPIRDLR…TMIEQHFEID (220 aa)) is the Radical SAM core domain. Arg-17 serves as a coordination point for GTP. Positions 24 and 28 each coordinate [4Fe-4S] cluster. Tyr-30 is an S-adenosyl-L-methionine binding site. Cys-31 serves as a coordination point for [4Fe-4S] cluster. Arg-71 is a GTP binding site. Gly-75 serves as a coordination point for S-adenosyl-L-methionine. A GTP-binding site is contributed by Thr-102. Ser-126 contacts S-adenosyl-L-methionine. Residue Lys-163 coordinates GTP. Residue Met-197 participates in S-adenosyl-L-methionine binding. [4Fe-4S] cluster-binding residues include Cys-261 and Cys-264. 266 to 268 (RAR) is a binding site for GTP. [4Fe-4S] cluster is bound at residue Cys-278.

This sequence belongs to the radical SAM superfamily. MoaA family. Monomer and homodimer. Requires [4Fe-4S] cluster as cofactor.

The enzyme catalyses GTP + AH2 + S-adenosyl-L-methionine = (8S)-3',8-cyclo-7,8-dihydroguanosine 5'-triphosphate + 5'-deoxyadenosine + L-methionine + A + H(+). It participates in cofactor biosynthesis; molybdopterin biosynthesis. Its function is as follows. Catalyzes the cyclization of GTP to (8S)-3',8-cyclo-7,8-dihydroguanosine 5'-triphosphate. The sequence is that of GTP 3',8-cyclase from Staphylococcus aureus (strain Mu3 / ATCC 700698).